Here is a 494-residue protein sequence, read N- to C-terminus: Aspartyl/glutamyl-tRNA(Asn/Gln) amidotransferase subunit B (494 aa).

The protein belongs to the GatB/GatE family. GatB subfamily. In terms of assembly, heterotrimer of A, B and C subunits.

It carries out the reaction L-glutamyl-tRNA(Gln) + L-glutamine + ATP + H2O = L-glutaminyl-tRNA(Gln) + L-glutamate + ADP + phosphate + H(+). It catalyses the reaction L-aspartyl-tRNA(Asn) + L-glutamine + ATP + H2O = L-asparaginyl-tRNA(Asn) + L-glutamate + ADP + phosphate + 2 H(+). Allows the formation of correctly charged Asn-tRNA(Asn) or Gln-tRNA(Gln) through the transamidation of misacylated Asp-tRNA(Asn) or Glu-tRNA(Gln) in organisms which lack either or both of asparaginyl-tRNA or glutaminyl-tRNA synthetases. The reaction takes place in the presence of glutamine and ATP through an activated phospho-Asp-tRNA(Asn) or phospho-Glu-tRNA(Gln). The sequence is that of Aspartyl/glutamyl-tRNA(Asn/Gln) amidotransferase subunit B from Rhodopseudomonas palustris (strain BisB5).